A 216-amino-acid polypeptide reads, in one-letter code: GTP cyclohydrolase 1 (216 aa).

Residues Cys-108, His-111, and Cys-179 each contribute to the Zn(2+) site.

The protein belongs to the GTP cyclohydrolase I family. As to quaternary structure, toroid-shaped homodecamer, composed of two pentamers of five dimers.

It carries out the reaction GTP + H2O = 7,8-dihydroneopterin 3'-triphosphate + formate + H(+). Its pathway is cofactor biosynthesis; 7,8-dihydroneopterin triphosphate biosynthesis; 7,8-dihydroneopterin triphosphate from GTP: step 1/1. This is GTP cyclohydrolase 1 from Shewanella amazonensis (strain ATCC BAA-1098 / SB2B).